A 24-amino-acid polypeptide reads, in one-letter code: 47 kDa cell wall protein (24 aa).

It localises to the secreted. It is found in the cell wall. This is 47 kDa cell wall protein from Nicotiana tabacum (Common tobacco).